The primary structure comprises 404 residues: Odorant receptor 74a (404 aa).

The Cytoplasmic portion of the chain corresponds to Met-1 to Glu-38. A helical membrane pass occupies residues Ser-39–Cys-59. Topologically, residues Glu-60 to His-67 are extracellular. The chain crosses the membrane as a helical span at residues Tyr-68 to Ile-88. Over Leu-89–Asn-141 the chain is Cytoplasmic. Residues Ser-142 to Tyr-162 form a helical membrane-spanning segment. The Extracellular segment spans residues His-163–His-181. A helical transmembrane segment spans residues Phe-182–Phe-202. Residues Gly-203–Arg-274 lie on the Cytoplasmic side of the membrane. A helical transmembrane segment spans residues Ile-275–Thr-295. Topologically, residues Asn-296–Tyr-303 are extracellular. A helical transmembrane segment spans residues Ile-304–Leu-324. Residues Leu-325–Arg-380 lie on the Cytoplasmic side of the membrane. A helical membrane pass occupies residues Val-381–Asn-401. At Ser-402 to Arg-404 the chain is on the extracellular side.

Belongs to the insect chemoreceptor superfamily. Heteromeric odorant receptor channel (TC 1.A.69) family. Or1a subfamily. As to quaternary structure, interacts with Orco. Complexes exist early in the endomembrane system in olfactory sensory neurons (OSNs), coupling these complexes to the conserved ciliary trafficking pathway.

It localises to the cell membrane. Its function is as follows. Odorant receptor which mediates acceptance or avoidance behavior, depending on its substrates. The odorant receptor repertoire encodes a large collection of odor stimuli that vary widely in identity, intensity, and duration. May form a complex with Orco to form odorant-sensing units, providing sensitive and prolonged odorant signaling and calcium permeability. Involved in the behavioral responses to octanol, anisole, and 2-heptanone. The protein is Odorant receptor 74a (Or74a) of Drosophila melanogaster (Fruit fly).